A 655-amino-acid polypeptide reads, in one-letter code: A-type voltage-gated potassium channel KCND3 (655 aa).

Topologically, residues 1 to 182 (MAAGVAAWLP…FENPHTSTLA (182 aa)) are cytoplasmic. An interaction with KCNIP1 and KCNIP2 region spans residues 6 to 21 (AAWLPFARAAAIGWMP). The segment at 70 to 78 (EKEFFFNED) is interaction with KCNIP1. Zn(2+) is bound by residues His104, Cys110, Cys131, and Cys132. Phosphoserine is present on Ser153. Residues 183 to 204 (LVFYYVTGFFIAVSVITNVVET) traverse the membrane as a helical segment. Over 205 to 223 (VPCGTVPGSKELPCGERYS) the chain is Extracellular. A helical membrane pass occupies residues 224–246 (VAFFCLDTACVMIFTVEYLLRLF). The Cytoplasmic portion of the chain corresponds to 247–253 (AAPSRYR). Residues 254–277 (FIRSVMSIIDVVAIMPYYIGLVMT) form a helical membrane-spanning segment. At 278-283 (NNEDVS) the chain is on the extracellular side. A helical; Voltage-sensor transmembrane segment spans residues 284-306 (GAFVTLRVFRVFRIFKFSRHSQG). Residues 307-318 (LRILGYTLKSCA) lie on the Cytoplasmic side of the membrane. The chain crosses the membrane as a helical span at residues 319–343 (SELGFLLFSLTMAIIIFATVMFYAE). Over 344–352 (KGSSASKFT) the chain is Extracellular. Residues 353–366 (SIPASFWYTIVTMT) constitute an intramembrane region (helical). Residues Thr367, Leu368, Gly369, and Tyr370 each contribute to the K(+) site. Residues 367 to 372 (TLGYGD) carry the Selectivity filter motif. Residues 367 to 374 (TLGYGDMV) lie within the membrane without spanning it. Residues 378–400 (IAGKIFGSICSLSGVLVIALPVP) form a helical membrane-spanning segment. The Cytoplasmic segment spans residues 401–655 (VIVSNFSRIY…TSNVVKVSAL (255 aa)). A Phosphothreonine modification is found at Thr459. The interval 470-487 (SLIESQHHHLLHCLEKTT) is interaction with KCNIP1 and KCNIP2. The interval 472 to 487 (IESQHHHLLHCLEKTT) is mediates dendritic targeting. A disordered region spans residues 523–565 (SSMQNYPSTRSPSLSSHSGLTTTCCSRRSKKTTHLPNSNLPAT). Residues 529 to 548 (PSTRSPSLSSHSGLTTTCCS) are compositionally biased toward low complexity. A phosphoserine mark is found at Ser569 and Ser585. The disordered stretch occupies residues 615–655 (ISIPTPPALTPEGESRPPPASPGPNTNIPSITSNVVKVSAL). Residues 637–655 (GPNTNIPSITSNVVKVSAL) are compositionally biased toward polar residues.

Belongs to the potassium channel family. D (Shal) (TC 1.A.1.2) subfamily. Kv4.3/KCND3 sub-subfamily. As to quaternary structure, homotetramer. Heterotetramer with KCND2. Associates with the regulatory subunit KCNIP3. Associates with the regulatory subunit KCNIP4. Interacts with KCNE1, KCNE2, SCN1B and KCNAB1 and DLG1. Component of heteromultimeric potassium channels. Identified in potassium channel complexes containing KCND1, KCND2, KCND3, KCNIP1, KCNIP2, KCNIP3, KCNIP4, DPP6 and DPP10. Interacts with KCNIP1; each KCNIP1 monomer interacts with two adjacent KCND3 subunits, through both the N-terminal inactivation ball of a KCND3 subunit and a C-terminal helix from the adjacent KCND3 subunit, clamping them together; this interaction stabilizes the tetrameric form and modulates the channel gating kinetics namely channel activation and inactivation kinetics and rate of recovery from inactivation. Interacts with DPP6; this interaction modulates the channel gating kinetics namely channel activation and inactivation kinetics and rate of recovery from inactivation. Interacts with KCNIP2; each KCNIP2 monomer interacts with two adjacent KCND3 subunits, through both the N-terminal inactivation ball of a KCND3 subunit and a C-terminal helix from the adjacent KCND3 subunit, clamping them together; this interaction modulates the channel gating kinetics. Post-translationally, regulated through phosphorylation at Ser-569 by CaMK2D.

The protein localises to the cell membrane. Its subcellular location is the sarcolemma. It is found in the cell projection. It localises to the dendrite. It carries out the reaction K(+)(in) = K(+)(out). Pore-forming (alpha) subunit of voltage-gated A-type potassium channels that mediates transmembrane potassium transport in excitable membranes, in brain and heart. In cardiomyocytes, may generate the transient outward potassium current I(To). In neurons, may conduct the transient subthreshold somatodendritic A-type potassium current (ISA). Kinetics properties are characterized by fast activation at subthreshold membrane potentials, rapid inactivation, and quick recovery from inactivation. Channel properties are modulated by interactions with regulatory subunits. Interaction with the regulatory subunits KCNIP1 or KCNIP2 modulates the channel gating kinetics namely channel activation and inactivation kinetics and rate of recovery from inactivation. Likewise, interaction with DPP6 modulates the channel gating kinetics namely channel activation and inactivation kinetics. The chain is A-type voltage-gated potassium channel KCND3 from Mus musculus (Mouse).